A 108-amino-acid chain; its full sequence is Nitrogenase-stabilizing/protective protein NifW (108 aa).

It belongs to the NifW family. Homotrimer; associates with NifD.

In terms of biological role, may protect the nitrogenase Fe-Mo protein from oxidative damage. The sequence is that of Nitrogenase-stabilizing/protective protein NifW from Zymomonas mobilis subsp. mobilis (strain ATCC 31821 / ZM4 / CP4).